A 264-amino-acid chain; its full sequence is Apolipoprotein A-I (264 aa).

The first 18 residues, 1–18 (MKAVVLAVAVLFLTGSQA), serve as a signal peptide directing secretion. 2 repeat units span residues 67–88 (LNLL…EQLG) and 89–110 (HVSQ…EEMN). Residues 67-264 (LNLLENWDTL…DQITKHVTTQ (198 aa)) form a 10 X approximate tandem repeats region. M109 is modified (methionine sulfoxide). The stretch at 111–121 (KDLEKVKKKVQ) is one 3; half-length repeat. 3 consecutive repeat copies span residues 122-143 (PFLD…HKVE), 144-165 (PLSL…EKLG), and 166-187 (PLGK…SHLR). The stretch at 188 to 207 (TYTEEMGQILAERLGAIKES) is one 7; truncated repeat. M193 bears the Methionine sulfoxide mark. Residues 208-229 (TSLAEYQTKASEHLRTFSKKAK) form repeat 8. A 9; half-length repeat occupies 230-240 (PILEDLRQGLL). Residues 241–264 (PVAENFKTNIKNTFDQITKHVTTQ) form repeat 10.

Belongs to the apolipoprotein A1/A4/E family. As to quaternary structure, homodimer. Interacts with APOA1BP and CLU. Component of a sperm activating protein complex (SPAP), consisting of APOA1, an immunoglobulin heavy chain, an immunoglobulin light chain and albumin. Interacts with NDRG1. Interacts with SCGB3A2. Interacts with NAXE and YJEFN3. In terms of processing, glycosylated. Palmitoylated. Post-translationally, phosphorylation sites are present in the extracellular medium.

Its subcellular location is the secreted. In terms of biological role, participates in the reverse transport of cholesterol from tissues to the liver for excretion by promoting cholesterol efflux from tissues and by acting as a cofactor for the lecithin cholesterol acyltransferase (LCAT). As part of the SPAP complex, activates spermatozoa motility. The chain is Apolipoprotein A-I (Apoa1) from Fukomys damarensis (Damaraland mole rat).